Consider the following 459-residue polypeptide: Cysteine--tRNA ligase (459 aa).

Zn(2+) is bound at residue cysteine 28. Positions 30-40 (VTVYDLCHIGH) match the 'HIGH' region motif. Zn(2+) is bound by residues cysteine 209, histidine 234, and glutamate 238. The 'KMSKS' region signature appears at 266-270 (KMSKS). Lysine 269 provides a ligand contact to ATP.

Belongs to the class-I aminoacyl-tRNA synthetase family. Monomer. The cofactor is Zn(2+).

It localises to the cytoplasm. It catalyses the reaction tRNA(Cys) + L-cysteine + ATP = L-cysteinyl-tRNA(Cys) + AMP + diphosphate. The protein is Cysteine--tRNA ligase of Histophilus somni (strain 2336) (Haemophilus somnus).